The sequence spans 1259 residues: Lysine-specific demethylase 2B (1259 aa).

The JmjC domain maps to 147-315 (FSHTKLERVV…MQLRVFEIED (169 aa)). Thr208 is a binding site for substrate. Residues His211 and Asp213 each coordinate Fe cation. Lys228 is a substrate binding site. His283 contacts Fe cation. Residues 388–402 (EEKGNLVEKPSKQSG) show a composition bias toward basic and acidic residues. Disordered regions lie at residues 388–463 (EEKG…ATDM) and 536–562 (KPSK…SANR). The span at 403–413 (DESSTTNSTHS) shows a compositional bias: polar residues. The span at 414 to 423 (NGKDAAEKKQ) shows a compositional bias: basic and acidic residues. The span at 426 to 437 (TLMQQLKRTLSN) shows a compositional bias: polar residues. The segment covering 536 to 548 (KPSKNRAVGRPKG) has biased composition (basic residues). The CXXC-type zinc finger occupies 567–613 (ARRRRTRCRKCEACLRTECGECHFCKDMKKFGGPGRMKQSCIMRQCI). Positions 574, 577, 580, 585, 588, 591, 607, 612, 623, 626, 649, 652, 657, 660, 680, and 683 each coordinate Zn(2+). The PHD-type zinc-finger motif lies at 620–686 (TAVCLVCGEA…CWECPKCNHA (67 aa)). 2 stretches are compositionally biased toward basic and acidic residues: residues 729-763 (KKKV…EDGH) and 771-790 (EKPP…EEKL). Residues 729–958 (KKKVEREETP…PPPSLSPPKC (230 aa)) form a disordered region. Residues 835 to 848 (SRSSSPTAGPSTEG) are compositionally biased toward polar residues. Positions 854 to 863 (KKKIRRKRRV) are enriched in basic residues. Basic and acidic residues predominate over residues 864–877 (SNKELSKELSKELN). Residues 864–891 (SNKELSKELSKELNQEIQKTESSLASEN) adopt a coiled-coil conformation. The span at 878-889 (QEIQKTESSLAS) shows a compositional bias: polar residues. Basic and acidic residues predominate over residues 890 to 908 (ENHHPIKSEPESDNEESKK). One can recognise an F-box domain in the interval 985–1030 (AHVMQREVWMAIFSYLSHRDLCICMRICRTWNRWCCDKRLWTQIDL). 5 LRR repeats span residues 1056-1081 (WTNI…NLSG), 1082-1105 (CSWI…NVQW), 1145-1170 (GLDI…DLSY), 1171-1200 (CNHV…NLSD), and 1201-1225 (CNNV…DLRF).

Belongs to the JHDM1 histone demethylase family. It depends on Fe(2+) as a cofactor.

The protein localises to the nucleus. The protein resides in the nucleolus. Its subcellular location is the chromosome. It catalyses the reaction N(6),N(6)-dimethyl-L-lysyl(36)-[histone H3] + 2 2-oxoglutarate + 2 O2 = L-lysyl(36)-[histone H3] + 2 formaldehyde + 2 succinate + 2 CO2. Histone demethylase activity is inhibited by fumarate. In terms of biological role, histone demethylase that demethylates 'Lys-4' and 'Lys-36' of histone H3, thereby playing a central role in histone code. Preferentially demethylates trimethylated H3 'Lys-4' and dimethylated H3 'Lys-36' residue while it has weak or no activity for mono- and tri-methylated H3 'Lys-36'. Preferentially binds the transcribed region of ribosomal RNA and represses the transcription of ribosomal RNA genes which inhibits cell growth and proliferation. In Xenopus laevis (African clawed frog), this protein is Lysine-specific demethylase 2B (kdm2b).